We begin with the raw amino-acid sequence, 406 residues long: Putative phosphate permease PH0640 (406 aa).

Helical transmembrane passes span 2–22 (IPIDPWIILTLILGFGMAWAI), 45–65 (AVLIAGVLEFTGAYFFGKTVT), 83–103 (VLIYGSIAALLGATIWLIIAT), 114–134 (SIIGGIVGYGIIYGGIGIVNW), 140–160 (VVLSWVLSPIVGAIFAFLVFR), 182–202 (FWIGLAFIVIGTMFYIKVLHG), 207–227 (IGILKYGIPTGIIVFIITSML), 265–285 (VANAIGPVAAVYTIATMGLAG), 288–308 (VPVPRWILALGGLGIAIGVAT), 330–350 (FTIDFSAATVVLIASWLGMPI), and 385–405 (FVTVPVAGIIAGIIFKVLLLI).

This sequence belongs to the inorganic phosphate transporter (PiT) (TC 2.A.20) family.

The protein resides in the cell membrane. Potential transporter for phosphate. In Pyrococcus horikoshii (strain ATCC 700860 / DSM 12428 / JCM 9974 / NBRC 100139 / OT-3), this protein is Putative phosphate permease PH0640.